The following is a 453-amino-acid chain: Probable L-galactonate transporter (453 aa).

A disordered region spans residues 1-23 (MEKENITIDPRSSFTPSSSADIP). Residues 1-42 (MEKENITIDPRSSFTPSSSADIPVPPDGLVQRSTRIKRIQTT) are Periplasmic-facing. The span at 10–20 (PRSSFTPSSSA) shows a compositional bias: polar residues. A helical membrane pass occupies residues 43-63 (AMLLLFFAAVINYLDRSSLSV). Topologically, residues 64-71 (ANLTIREE) are cytoplasmic. The helical transmembrane segment at 72-92 (LGLSATEIGALLSVFSLAYGI) threads the bilayer. Over 93 to 107 (AQLPCGPLLDRKGPR) the chain is Periplasmic. The helical transmembrane segment at 108–128 (LMLGLGMFFWSLFQAMSGMVH) threads the bilayer. At 129-174 (NFTQFVLVRIGMGIGEAPMNPCGVKVINDWFNIKERGRPMGFFNAA) the chain is on the cytoplasmic side. The chain crosses the membrane as a helical span at residues 175–195 (STIGVAVSPPILAAMMLVMGW). A topological domain (periplasmic) is located at residue Arg-196. The chain crosses the membrane as a helical span at residues 197–217 (GMFITIGVLGIFLAIGWYMLY). The Cytoplasmic portion of the chain corresponds to 218–259 (RNREHVELTAVEQAYLNAGSVNARRDPLSFAEWRSLFRNRTM). The chain crosses the membrane as a helical span at residues 260–280 (WGMMLGFSGINYTAWLYLAWL). Topologically, residues 281 to 295 (PGYLQTAYNLDLKST) are periplasmic. Residues 296–316 (GLMAAIPFLFGAAGMLVNGYV) form a helical membrane-spanning segment. Topologically, residues 317–332 (TDWLVKGGMAPIKSRK) are cytoplasmic. The helical transmembrane segment at 333–353 (ICIIAGMFCSAAFTLIVPQAT) threads the bilayer. Topologically, residues 354 to 359 (TSMTAV) are periplasmic. Residues 360-380 (LLIGMALFCIHFAGTSCWGLI) traverse the membrane as a helical segment. Topologically, residues 381–394 (HVAVASRMTASVGS) are cytoplasmic. Residues 395–415 (IQNFASFICASFAPIITGFIV) form a helical membrane-spanning segment. Topologically, residues 416–422 (DTTHSFR) are periplasmic. Residues 423–443 (LALIICGCVTAAGALAYIFLV) traverse the membrane as a helical segment. Over 444-453 (RQPINDPRKD) the chain is Cytoplasmic.

Belongs to the major facilitator superfamily. Phthalate permease family.

Its subcellular location is the cell inner membrane. The enzyme catalyses L-galactonate(in) + H(+)(in) = L-galactonate(out) + H(+)(out). Probably responsible for the transport of L-galactonate from the periplasm across the inner membrane. Is essential for growth on L-galactonate as the sole carbon source. This Escherichia coli (strain K12) protein is Probable L-galactonate transporter (lgoT).